A 367-amino-acid chain; its full sequence is 2-aminoethylphosphonate--pyruvate transaminase (367 aa).

At Lys194 the chain carries N6-(pyridoxal phosphate)lysine.

Belongs to the class-V pyridoxal-phosphate-dependent aminotransferase family. PhnW subfamily. In terms of assembly, homodimer. The cofactor is pyridoxal 5'-phosphate.

It catalyses the reaction (2-aminoethyl)phosphonate + pyruvate = phosphonoacetaldehyde + L-alanine. Involved in phosphonate degradation. This Salmonella heidelberg (strain SL476) protein is 2-aminoethylphosphonate--pyruvate transaminase.